The chain runs to 323 residues: Beta-ketoacyl-[acyl-carrier-protein] synthase III (323 aa).

Active-site residues include Cys114 and His250. Residues 251-255 (QANLR) form an ACP-binding region. The active site involves Asn280.

It belongs to the thiolase-like superfamily. FabH family. In terms of assembly, homodimer.

The protein resides in the cytoplasm. It catalyses the reaction malonyl-[ACP] + acetyl-CoA + H(+) = 3-oxobutanoyl-[ACP] + CO2 + CoA. It functions in the pathway lipid metabolism; fatty acid biosynthesis. In terms of biological role, catalyzes the condensation reaction of fatty acid synthesis by the addition to an acyl acceptor of two carbons from malonyl-ACP. Catalyzes the first condensation reaction which initiates fatty acid synthesis and may therefore play a role in governing the total rate of fatty acid production. Possesses both acetoacetyl-ACP synthase and acetyl transacylase activities. Its substrate specificity determines the biosynthesis of branched-chain and/or straight-chain of fatty acids. This Cereibacter sphaeroides (strain ATCC 17029 / ATH 2.4.9) (Rhodobacter sphaeroides) protein is Beta-ketoacyl-[acyl-carrier-protein] synthase III.